A 107-amino-acid polypeptide reads, in one-letter code: Putative double-stranded DNA mimic protein ETA_15890 (107 aa).

It belongs to the putative dsDNA mimic protein family.

Its function is as follows. May act as a double-stranded DNA (dsDNA) mimic. Probably regulates the activity of a dsDNA-binding protein. The protein is Putative double-stranded DNA mimic protein ETA_15890 of Erwinia tasmaniensis (strain DSM 17950 / CFBP 7177 / CIP 109463 / NCPPB 4357 / Et1/99).